Here is a 258-residue protein sequence, read N- to C-terminus: Imidazole glycerol phosphate synthase subunit HisF (258 aa).

Residues Asp11 and Asp130 contribute to the active site.

This sequence belongs to the HisA/HisF family. As to quaternary structure, heterodimer of HisH and HisF.

It localises to the cytoplasm. The enzyme catalyses 5-[(5-phospho-1-deoxy-D-ribulos-1-ylimino)methylamino]-1-(5-phospho-beta-D-ribosyl)imidazole-4-carboxamide + L-glutamine = D-erythro-1-(imidazol-4-yl)glycerol 3-phosphate + 5-amino-1-(5-phospho-beta-D-ribosyl)imidazole-4-carboxamide + L-glutamate + H(+). It functions in the pathway amino-acid biosynthesis; L-histidine biosynthesis; L-histidine from 5-phospho-alpha-D-ribose 1-diphosphate: step 5/9. Functionally, IGPS catalyzes the conversion of PRFAR and glutamine to IGP, AICAR and glutamate. The HisF subunit catalyzes the cyclization activity that produces IGP and AICAR from PRFAR using the ammonia provided by the HisH subunit. The sequence is that of Imidazole glycerol phosphate synthase subunit HisF from Escherichia coli O7:K1 (strain IAI39 / ExPEC).